Here is a 183-residue protein sequence, read N- to C-terminus: NADH-quinone oxidoreductase subunit B (183 aa).

Cysteine 60, cysteine 61, cysteine 125, and cysteine 154 together coordinate [4Fe-4S] cluster.

The protein belongs to the complex I 20 kDa subunit family. In terms of assembly, NDH-1 is composed of 14 different subunits. Subunits NuoB, C, D, E, F, and G constitute the peripheral sector of the complex. Requires [4Fe-4S] cluster as cofactor.

Its subcellular location is the cell inner membrane. It catalyses the reaction a quinone + NADH + 5 H(+)(in) = a quinol + NAD(+) + 4 H(+)(out). NDH-1 shuttles electrons from NADH, via FMN and iron-sulfur (Fe-S) centers, to quinones in the respiratory chain. The immediate electron acceptor for the enzyme in this species is believed to be ubiquinone. Couples the redox reaction to proton translocation (for every two electrons transferred, four hydrogen ions are translocated across the cytoplasmic membrane), and thus conserves the redox energy in a proton gradient. This is NADH-quinone oxidoreductase subunit B from Desulfovibrio desulfuricans (strain ATCC 27774 / DSM 6949 / MB).